Here is a 335-residue protein sequence, read N- to C-terminus: Holliday junction branch migration complex subunit RuvB (335 aa).

Positions 1–181 are large ATPase domain (RuvB-L); it reads MERIVEVEKF…FGMHFRLQFY (181 aa). ATP contacts are provided by residues L20, R21, G62, K65, T66, T67, 128 to 130, R171, Y181, and R218; that span reads EDF. Position 66 (T66) interacts with Mg(2+). The interval 182 to 252 is small ATPAse domain (RuvB-S); the sequence is TPQELAQIIT…RTQKALEALG (71 aa). The head domain (RuvB-H) stretch occupies residues 255–335; that stretch reads ERGFDELDLK…LTPNIQNSLF (81 aa). The DNA site is built by R309 and R314.

It belongs to the RuvB family. In terms of assembly, homohexamer. Forms an RuvA(8)-RuvB(12)-Holliday junction (HJ) complex. HJ DNA is sandwiched between 2 RuvA tetramers; dsDNA enters through RuvA and exits via RuvB. An RuvB hexamer assembles on each DNA strand where it exits the tetramer. Each RuvB hexamer is contacted by two RuvA subunits (via domain III) on 2 adjacent RuvB subunits; this complex drives branch migration. In the full resolvosome a probable DNA-RuvA(4)-RuvB(12)-RuvC(2) complex forms which resolves the HJ.

It localises to the cytoplasm. It carries out the reaction ATP + H2O = ADP + phosphate + H(+). Functionally, the RuvA-RuvB-RuvC complex processes Holliday junction (HJ) DNA during genetic recombination and DNA repair, while the RuvA-RuvB complex plays an important role in the rescue of blocked DNA replication forks via replication fork reversal (RFR). RuvA specifically binds to HJ cruciform DNA, conferring on it an open structure. The RuvB hexamer acts as an ATP-dependent pump, pulling dsDNA into and through the RuvAB complex. RuvB forms 2 homohexamers on either side of HJ DNA bound by 1 or 2 RuvA tetramers; 4 subunits per hexamer contact DNA at a time. Coordinated motions by a converter formed by DNA-disengaged RuvB subunits stimulates ATP hydrolysis and nucleotide exchange. Immobilization of the converter enables RuvB to convert the ATP-contained energy into a lever motion, pulling 2 nucleotides of DNA out of the RuvA tetramer per ATP hydrolyzed, thus driving DNA branch migration. The RuvB motors rotate together with the DNA substrate, which together with the progressing nucleotide cycle form the mechanistic basis for DNA recombination by continuous HJ branch migration. Branch migration allows RuvC to scan DNA until it finds its consensus sequence, where it cleaves and resolves cruciform DNA. In Nitratiruptor sp. (strain SB155-2), this protein is Holliday junction branch migration complex subunit RuvB.